Reading from the N-terminus, the 22-residue chain is Cysteine-rich venom protein collettin-a (22 aa).

Positions 1-15 (SNKKNYQKEIVDKHN) are enriched in basic and acidic residues. The segment at 1 to 22 (SNKKNYQKEIVDKHNALRRSVK) is disordered.

This sequence belongs to the CRISP family. Post-translationally, contains 8 disulfide bonds. As to expression, expressed by the venom gland.

The protein localises to the secreted. This is Cysteine-rich venom protein collettin-a from Pseudechis colletti (Collett's snake).